Reading from the N-terminus, the 210-residue chain is MSVSDLRQSYEKGVLVEEQAAASPFQQFARWFDEAVAARVPEPNAMTLATVNAEGQPSARIVLIKGYDDAGFVFFTNYESRKGLDLDANPRASLLFFWQPLERQVRIEGVIEKVSAAESDEYFHSRPLGSRLGAWASRQSQPITRDELEAREREFRDRYGEHPPRPPHWGGYRLKPNRFEFWQGRPSRLHDRLRYEPDGKQGWTIDRLSP.

Residues 7–10 (RQSY) and lysine 65 each bind substrate. FMN-binding positions include 60–65 (RIVLIK), 75–76 (FT), arginine 81, lysine 82, and glutamine 104. Substrate is bound by residues tyrosine 122, arginine 126, and serine 130. FMN-binding positions include 139–140 (QS) and tryptophan 182. Substrate is bound at residue 188–190 (RLH). An FMN-binding site is contributed by arginine 192.

Belongs to the pyridoxamine 5'-phosphate oxidase family. In terms of assembly, homodimer. It depends on FMN as a cofactor.

The catalysed reaction is pyridoxamine 5'-phosphate + O2 + H2O = pyridoxal 5'-phosphate + H2O2 + NH4(+). It catalyses the reaction pyridoxine 5'-phosphate + O2 = pyridoxal 5'-phosphate + H2O2. The protein operates within cofactor metabolism; pyridoxal 5'-phosphate salvage; pyridoxal 5'-phosphate from pyridoxamine 5'-phosphate: step 1/1. It functions in the pathway cofactor metabolism; pyridoxal 5'-phosphate salvage; pyridoxal 5'-phosphate from pyridoxine 5'-phosphate: step 1/1. In terms of biological role, catalyzes the oxidation of either pyridoxine 5'-phosphate (PNP) or pyridoxamine 5'-phosphate (PMP) into pyridoxal 5'-phosphate (PLP). The sequence is that of Pyridoxine/pyridoxamine 5'-phosphate oxidase from Bordetella bronchiseptica (strain ATCC BAA-588 / NCTC 13252 / RB50) (Alcaligenes bronchisepticus).